Reading from the N-terminus, the 2179-residue chain is Axotactin (2179 aa).

A signal peptide spans 1 to 18 (MAFPYIWALLPLICSASG). Over 19–1816 (LSLPNMTSTD…DENKQEDSTQ (1798 aa)) the chain is Extracellular. N-linked (GlcNAc...) asparagine glycosylation is found at Asn-23 and Asn-52. The disordered stretch occupies residues 59 to 107 (GGLAGSSTGGQSLPDTGGGNSAGGSPAGGSSGTGGGGSNSGISGNNSAM). The segment covering 74-97 (TGGGNSAGGSPAGGSSGTGGGGSN) has biased composition (gly residues). The N-linked (GlcNAc...) asparagine glycan is linked to Asn-103. Positions 119-170 (CAGPGDPGPCKQYIYKWRYEPTTNECTNFIWGGCEGNPQNRFGTEAECLFHC) constitute a BPTI/Kunitz inhibitor domain. Disulfide bonds link Cys-119/Cys-170, Cys-128/Cys-152, and Cys-144/Cys-166. The segment at 201–220 (YTQSPAQSPDGMGGAEGGDG) is disordered. Gly residues predominate over residues 211–220 (GMGGAEGGDG). Residues 242 to 438 (KTFIFAKNNT…TKHENVNEGC (197 aa)) form the Laminin G-like 1 domain. The N-linked (GlcNAc...) asparagine glycan is linked to Asn-249. 4 disulfide bridges follow: Cys-405–Cys-438, Cys-442–Cys-455, Cys-449–Cys-464, and Cys-466–Cys-476. Positions 439 to 477 (SDMCESRHNLCFVGSRCINHYGGISCDCFGTHYEGEHCD) constitute an EGF-like 1 domain. 2 consecutive Laminin G-like domains span residues 481 to 664 (ATII…AEFV) and 660 to 839 (EAEF…LDNC). Asn-542, Asn-571, and Asn-741 each carry an N-linked (GlcNAc...) asparagine glycan. Cystine bridges form between Cys-808–Cys-839, Cys-845–Cys-857, Cys-851–Cys-866, and Cys-868–Cys-878. One can recognise an EGF-like 2 domain in the interval 841 to 879 (YIDPCKRPNTCEHGGKCFVKDDRVTCDCKHTGYIGKNCH). Residues Asn-925, Asn-1000, Asn-1019, and Asn-1026 are each glycosylated (N-linked (GlcNAc...) asparagine). The region spanning 1087–1259 (YVVTFTTSQS…VHLSEIIKDC (173 aa)) is the Laminin G-like 4 domain. 4 disulfide bridges follow: Cys-1231–Cys-1259, Cys-1263–Cys-1274, Cys-1268–Cys-1283, and Cys-1285–Cys-1296. The EGF-like 3 domain occupies 1260-1297 (KPSCVPSPCRNGAQCKELWSSFKCVCNNPWAHIGEFCE). Residues 1316–1526 (RNYLSVGATP…PTQEGVLPNC (211 aa)) form the Laminin G-like 5 domain. N-linked (GlcNAc...) asparagine glycosylation is present at Asn-1393. Disulfide bonds link Cys-1494/Cys-1526, Cys-1530/Cys-1541, Cys-1535/Cys-1552, and Cys-1554/Cys-1564. One can recognise an EGF-like 4 domain in the interval 1527 to 1565 (QIKCDAEPCKNGGTCQEHFAEQLSTCDCEHTSFLGEFCS). Residues 1569–1765 (GADFSGESTL…NPQGVRSAQC (197 aa)) form the Laminin G-like 6 domain. Residues Asn-1667, Asn-1707, Asn-1751, and Asn-1782 are each glycosylated (N-linked (GlcNAc...) asparagine). A disulfide bridge connects residues Cys-1722 and Cys-1765. Residues 1817-1837 (VVFLTLTSVFVIIVICCLLEV) form a helical membrane-spanning segment. Residues 1838–2179 (YRSHLAYKKR…TSIDSILSLD (342 aa)) lie on the Cytoplasmic side of the membrane. Disordered stretches follow at residues 1891–2141 (YTYK…PTLF) and 2156–2179 (SYLGGPRLQPRSNRTSIDSILSLD). Positions 1916-1930 (GSATPSQPGTPTALS) are enriched in polar residues. Residues 1940 to 1949 (EEEEEEEDEA) are compositionally biased toward acidic residues. Basic and acidic residues predominate over residues 1954 to 1966 (AAEKSGENEEPPA). 2 stretches are compositionally biased toward polar residues: residues 1969–1981 (TTASEIKESQAQP) and 2010–2025 (EPSSQLNSAQNGQLAQ). Over residues 2064–2079 (PQEHKSRHKATDDTEA) the composition is skewed to basic and acidic residues. The span at 2082–2091 (QQQQQQQQQQ) shows a compositional bias: low complexity. Composition is skewed to polar residues over residues 2092-2105 (SFDVATNANGSSLP) and 2165-2179 (PRSNRTSIDSILSLD).

The protein localises to the cell projection. It is found in the axon. The protein resides in the membrane. Functionally, may have serine protease inhibitor activity. Might play a role in the glial-neuronal signaling pathway that is important in establishing the electrical properties of axonal membranes. The sequence is that of Axotactin from Drosophila melanogaster (Fruit fly).